The chain runs to 483 residues: Glycogen synthase (483 aa).

Lys-15 is an ADP-alpha-D-glucose binding site.

Belongs to the glycosyltransferase 1 family. Bacterial/plant glycogen synthase subfamily.

The enzyme catalyses [(1-&gt;4)-alpha-D-glucosyl](n) + ADP-alpha-D-glucose = [(1-&gt;4)-alpha-D-glucosyl](n+1) + ADP + H(+). The protein operates within glycan biosynthesis; glycogen biosynthesis. Synthesizes alpha-1,4-glucan chains using ADP-glucose. This is Glycogen synthase from Desulfatibacillum aliphaticivorans.